Reading from the N-terminus, the 705-residue chain is Dolichyl-diphosphooligosaccharide--protein glycosyltransferase subunit STT3A (705 aa).

Topologically, residues 1-17 (MTKFGFLRLSYEKQDTL) are cytoplasmic. A helical membrane pass occupies residues 18 to 38 (LKLLILSMAAVLSFSTRLFAV). At 39–119 (LRFESVIHEF…IDIRNVCVFL (81 aa)) the chain is on the lumenal side. The DXD motif 1 signature appears at 47–49 (EFD). D49 contributes to the Mn(2+) binding site. A helical transmembrane segment spans residues 120–138 (APLFSSFTTIVTYHLTKEL). Residues 139–140 (KD) are Cytoplasmic-facing. The helical transmembrane segment at 141–158 (AGAGLLAAAMIAVVPGYI) threads the bilayer. Residues 159 to 169 (SRSVAGSYDNE) are Lumenal-facing. Mn(2+) contacts are provided by D167 and E169. Residues 167–169 (DNE) carry the DXD motif 2 motif. Residues 170-189 (GIAIFCMLLTYYMWIKAVKT) traverse the membrane as a helical segment. The Cytoplasmic segment spans residues 190-191 (GS). The chain crosses the membrane as a helical span at residues 192–206 (ICWAAKCALAYFYMV). Over 207 to 211 (SSWGG) the chain is Lumenal. Residues 212 to 228 (YVFLINLIPLHVLVLML) form a helical membrane-spanning segment. Over 229-233 (TGRFS) the chain is Cytoplasmic. The chain crosses the membrane as a helical span at residues 234-259 (HRIYVAYCTVYCLGTILSMQISFVGF). The Lumenal segment spans residues 260-267 (QPVLSSEH). A helical membrane pass occupies residues 268-287 (MAAFGVFGLCQIHAFVDYLR). Residues 288–300 (SKLNPQQFEVLFR) lie on the Cytoplasmic side of the membrane. A helical membrane pass occupies residues 301-321 (SVISLVGFVLLTVGALLMLTG). Topologically, residues 322–356 (KISPWTGRFYSLLDPSYAKNNIPIIASVSEHQPTT) are lumenal. Residues 348-351 (SVSE) carry the SVSE motif motif. Residues 357 to 379 (WSSYYFDLQLLVFMFPVGLYYCF) traverse the membrane as a helical segment. Residues 380 to 385 (SNLSDA) are Cytoplasmic-facing. The helical transmembrane segment at 386–402 (RIFIIMYGVTSMYFSAV) threads the bilayer. The Lumenal segment spans residues 403 to 406 (MVRL). Position 405 (R405) interacts with dolichyl diphosphooligosaccharide. The chain crosses the membrane as a helical span at residues 407-428 (MLVLAPVMCILSGIGVSQVLST). Residues 429–453 (YMKNLDISRPDKKSKKQQDSTYPIK) lie on the Cytoplasmic side of the membrane. A helical transmembrane segment spans residues 454 to 473 (NEVASGMILVMAFFLITYTF). The Lumenal segment spans residues 474–705 (HSTWVTSEAY…DLDNRGLSRT (232 aa)). The interacts with target acceptor peptide in protein substrate stretch occupies residues 525-527 (WWD). A WWDYG motif motif is present at residues 525–529 (WWDYG). Y530 serves as a coordination point for dolichyl diphosphooligosaccharide. N537 and N544 each carry an N-linked (GlcNAc...) asparagine glycan. N548 carries an N-linked (GlcNAc...) (high mannose) asparagine glycan. A DK motif motif is present at residues 592-599 (DINKFLWM).

This sequence belongs to the STT3 family. In terms of assembly, component of the oligosaccharyltransferase (OST) complex. There are 2 OST complexes, OST-A and OST-B, which contain STT3A or STT3B as catalytic subunit, respectively. OST-A and OST-B contain common core subunits RPN1, RPN2, OST48, OST4, DAD1 and TMEM258, and OST-A contains DC2/OSTC and KRTCAP2/KCP2 specific accessory subunits. OST-A complex assembly occurs through the formation of 3 subcomplexes. Subcomplex 1 contains RPN1 and TMEM258, subcomplex 2 contains the OST-A-specific subunits STT3A, DC2/OSTC, and KCP2 as well as the core subunit OST4, and subcomplex 3 contains RPN2, DAD1, and OST48. The OST-A complex can form stable complexes with the Sec61 complex or with both the Sec61 and TRAP complexes. The cofactor is Mg(2+). It depends on Mn(2+) as a cofactor. Expressed at high levels in placenta, liver, muscle and pancreas, and at very low levels in brain, lung and kidney. Expressed in skin fibroblasts (at protein level).

It localises to the endoplasmic reticulum. The protein resides in the endoplasmic reticulum membrane. It carries out the reaction a di-trans,poly-cis-dolichyl diphosphooligosaccharide + L-asparaginyl-[protein] = N(4)-(oligosaccharide-(1-&gt;4)-N-acetyl-beta-D-glucosaminyl-(1-&gt;4)-N-acetyl-beta-D-glucosaminyl)-L-asparaginyl-[protein] + a di-trans,poly-cis-dolichyl diphosphate + H(+). It functions in the pathway protein modification; protein glycosylation. Its activity is regulated as follows. STT3A, but not STT3B, is specifically inhibited by the N-glycosylation inhibitor NGI-235, which prevents productive binding pose of the glycan donor in the active site of STT3A. Its function is as follows. Catalytic subunit of the oligosaccharyl transferase (OST) complex that catalyzes the initial transfer of a defined glycan (Glc(3)Man(9)GlcNAc(2) in eukaryotes) from the lipid carrier dolichol-pyrophosphate to an asparagine residue within an Asn-X-Ser/Thr consensus motif in nascent polypeptide chains, the first step in protein N-glycosylation. N-glycosylation occurs cotranslationally and the complex associates with the Sec61 complex at the channel-forming translocon complex that mediates protein translocation across the endoplasmic reticulum (ER). All subunits are required for a maximal enzyme activity. This subunit contains the active site and the acceptor peptide and donor lipid-linked oligosaccharide (LLO) binding pockets. STT3A is present in the majority of OST complexes and mediates cotranslational N-glycosylation of most sites on target proteins, while STT3B-containing complexes are required for efficient post-translational glycosylation and mediate glycosylation of sites that have been skipped by STT3A. STT3A-containing OST-A complex is also required to prevent hyperglycosylation of some target proteins by preventing glycosylation of facultative sites before folding of target proteins is completed. The chain is Dolichyl-diphosphooligosaccharide--protein glycosyltransferase subunit STT3A from Homo sapiens (Human).